Here is a 251-residue protein sequence, read N- to C-terminus: Ditrans,polycis-undecaprenyl-diphosphate synthase ((2E,6E)-farnesyl-diphosphate specific) (251 aa).

Asp-29 is an active-site residue. Residue Asp-29 coordinates Mg(2+). Substrate contacts are provided by residues 30–33, Trp-34, Arg-42, His-46, and 74–76; these read GNGK and SSD. The active-site Proton acceptor is Asn-77. Residues Trp-78, Arg-80, Arg-197, and 203–205 contribute to the substrate site; that span reads RLS. Glu-216 serves as a coordination point for Mg(2+).

It belongs to the UPP synthase family. Homodimer. Mg(2+) serves as cofactor.

The catalysed reaction is 8 isopentenyl diphosphate + (2E,6E)-farnesyl diphosphate = di-trans,octa-cis-undecaprenyl diphosphate + 8 diphosphate. Functionally, catalyzes the sequential condensation of isopentenyl diphosphate (IPP) with (2E,6E)-farnesyl diphosphate (E,E-FPP) to yield (2Z,6Z,10Z,14Z,18Z,22Z,26Z,30Z,34E,38E)-undecaprenyl diphosphate (di-trans,octa-cis-UPP). UPP is the precursor of glycosyl carrier lipid in the biosynthesis of bacterial cell wall polysaccharide components such as peptidoglycan and lipopolysaccharide. The polypeptide is Ditrans,polycis-undecaprenyl-diphosphate synthase ((2E,6E)-farnesyl-diphosphate specific) (Buchnera aphidicola subsp. Baizongia pistaciae (strain Bp)).